The following is a 445-amino-acid chain: Cyclic GMP-AMP phosphodiesterase SMPDL3A (445 aa).

Positions 1–22 (MALLGNFLCCLLVAWLCGPGLG) are cleaved as a signal peptide. Zn(2+) contacts are provided by aspartate 42 and histidine 44. A disulfide bridge links cysteine 59 with cysteine 78. A glycan (N-linked (GlcNAc...) asparagine) is linked at asparagine 66. Aspartate 107 serves as a coordination point for Zn(2+). Position 111 (histidine 111) interacts with ATP. The N-linked (GlcNAc...) asparagine glycan is linked to asparagine 128. Asparagine 148 provides a ligand contact to Zn(2+). ATP contacts are provided by asparagine 148 and histidine 149. Residues asparagine 219 and asparagine 235 are each glycosylated (N-linked (GlcNAc...) asparagine). Histidine 249 contacts Zn(2+). ATP is bound at residue tyrosine 257. Zn(2+) contacts are provided by histidine 290 and histidine 292. 2 N-linked (GlcNAc...) asparagine glycosylation sites follow: asparagine 353 and asparagine 364. Intrachain disulfides connect cysteine 417–cysteine 421 and cysteine 427–cysteine 440.

The protein belongs to the acid sphingomyelinase family. Monomer. Homodimer; homodimerizes following 2',3'-cGAMP-binding. Zn(2+) serves as cofactor. N-glycosylated. Detected in blood serum (at protein level).

The protein localises to the secreted. It carries out the reaction 2',3'-cGAMP + H2O = 5'-pGpA(2'-5') + H(+). The enzyme catalyses 5'-pGpA(2'-5') + H2O = 5'-GpA(2'-5') + phosphate. It catalyses the reaction a ribonucleoside 5'-triphosphate + H2O = a ribonucleoside 5'-diphosphate + phosphate + H(+). The catalysed reaction is ATP + H2O = ADP + phosphate + H(+). Requires micromolar levels of Zn(2+) for activity. Inhibited by millimolar levels of Zn(2+). In terms of biological role, cyclic-nucleotide phosphodiesterase that acts as a negative regulator of innate immunity by mediating degradation of 2',3'-cGAMP, thereby inhibiting the cGAS-STING signaling. Specifically linearizes 2',3'-cGAMP into 2'5'-bond pGpA and further hydrolyzes pGpA to produce GpA. Also has in vitro nucleotide phosphodiesterase activity with nucleoside triphosphates, such as ATP. Has in vitro activity with p-nitrophenyl-TMP. Has lower activity with nucleoside diphosphates, and no activity with nucleoside monophosphates. Has in vitro activity with CDP-choline, giving rise to CMP and phosphocholine. Has in vitro activity with CDP-ethanolamine. Does not have sphingomyelin phosphodiesterase activity. This chain is Cyclic GMP-AMP phosphodiesterase SMPDL3A, found in Mus musculus (Mouse).